Consider the following 1943-residue polypeptide: Cadherin-86C (1943 aa).

The segment at 1–102 (MASTSSSQPE…QNQQMQHHWP (102 aa)) is disordered. Residues 1 to 934 (MASTSSSQPE…TDTQYKAENK (934 aa)) are Extracellular-facing. An N-linked (GlcNAc...) asparagine glycan is attached at N12. Basic residues predominate over residues 50 to 89 (PHHHHHHHHQHHHHHRLKQHHRHHHHHHRLQHHHHHHQQQ). Residues 90–100 (HNHQNQQMQHH) show a composition bias toward low complexity. 5 Cadherin domains span residues 238–366 (CSIT…PPVF), 367–483 (TSAP…PPYF), 484–600 (ENDH…APVF), 601–708 (EQPA…TPIF), and 709–832 (DKDL…SVKF). N244, N419, N531, N579, N585, N612, and N645 each carry an N-linked (GlcNAc...) asparagine glycan. N-linked (GlcNAc...) asparagine glycosylation is present at N912. The helical transmembrane segment at 935 to 955 (VLFWLLILLATLVALTILILL) threads the bilayer. Over 956-1943 (LCCICSWCPL…NSGGESPQYS (988 aa)) the chain is Cytoplasmic. Disordered stretches follow at residues 1038–1058 (DVGR…SAEE), 1390–1442 (KPSR…RKRI), 1458–1516 (EEEE…SHNR), 1546–1695 (YKHS…ERNV), and 1707–1895 (KSSV…DDHD). The segment covering 1047–1058 (EGDRRHIQSAEE) has biased composition (basic and acidic residues). A compositionally biased stretch (basic residues) spans 1426–1442 (IKRRRTKKRPRQPRKRI). Basic and acidic residues-rich tracts occupy residues 1486 to 1497 (QLSDESRKDQSR) and 1507 to 1516 (HRSESDSHNR). The segment covering 1552 to 1568 (DFDEDDTEYSIDSDGDE) has biased composition (acidic residues). Residues 1580 to 1602 (QENERYRRQERTYAEPENPVDRK) show a composition bias toward basic and acidic residues. A compositionally biased stretch (polar residues) spans 1633 to 1667 (KQTSSEPPHNRVSISKYESTVTENGRKLMSTSTEI). The span at 1709 to 1724 (SVSGRTSTESSKSQPS) shows a compositional bias: low complexity. Composition is skewed to basic and acidic residues over residues 1754–1764 (TGGRYKPEPAP), 1774–1793 (LLKE…ETDT), 1800–1810 (HSEHRFERENA), and 1837–1863 (KESK…ENEV). Over residues 1879 to 1889 (HPTQKQLNAST) the composition is skewed to polar residues.

In terms of tissue distribution, as cell intercalation proceeds, a row of stigmatophore cells surrounding the spiracular chamber show expression of Cad86C. Expression is regulated by the Abd-B cascade, requiring sal. Expressed in a broad region of the morphogenetic furrow and in clusters of cells posterior to the morphogenetic furrow. Weakly expressed in the epithelium of wing imaginal disks. In eye imaginal disk cells within the morphogenetic furrow, expression is localized to the apical region.

It localises to the cell membrane. Functionally, cadherins are calcium-dependent cell adhesion proteins. They preferentially interact with themselves in a homophilic manner in connecting cells. The protein is Cadherin-86C (Cad86C) of Drosophila melanogaster (Fruit fly).